The primary structure comprises 465 residues: Tubulin gamma chain (465 aa).

Residue 144–150 (AGGTGSG) participates in GTP binding.

The protein belongs to the tubulin family.

The protein localises to the cytoplasm. It localises to the cytoskeleton. It is found in the microtubule organizing center. Its subcellular location is the spindle pole body. Tubulin is the major constituent of microtubules. The gamma chain is found at microtubule organizing centers (MTOC) such as the spindle poles or the centrosome, suggesting that it is involved in the minus-end nucleation of microtubule assembly. This is Tubulin gamma chain (TUB4) from Candida glabrata (strain ATCC 2001 / BCRC 20586 / JCM 3761 / NBRC 0622 / NRRL Y-65 / CBS 138) (Yeast).